A 491-amino-acid polypeptide reads, in one-letter code: Diacylglycerol O-acyltransferase 1 (491 aa).

Residues 1–60 are disordered; the sequence is MGDRGGAGGTRRRRTGSRPSSHGGGGPAAAEEEVRDAAAGPDMGAAGDAPAPAPSKDADD. Over 1–86 the chain is Cytoplasmic; the sequence is MGDRGGAGGT…SLFSSDSGFN (86 aa). The interval 1-94 is involved in homomerization; it reads MGDRGGAGGT…FNNYRGILNW (94 aa). 2 positions are modified to phosphoserine: Ser-20 and Ser-21. Low complexity predominate over residues 37–50; that stretch reads AAAGPDMGAAGDAP. A helical membrane pass occupies residues 87 to 121; it reads NYRGILNWCVVMLILSNARLFLENLIKYGILVDPI. Over 122–133 the chain is Lumenal; that stretch reads QVVSLFLKDPYS. Positions 122–133 are extracellular loop 1 (EL1); sequence QVVSLFLKDPYS. The chain crosses the membrane as a helical span at residues 134–159; the sequence is WPAPCLVIAANVFAVAAFQVEKRLAV. An MBOAT fold region spans residues 134-491; the sequence is WPAPCLVIAA…LNYEAPVAGA (358 aa). Residues 160-164 are Cytoplasmic-facing; sequence GALTE. Residues 165–187 traverse the membrane as a helical segment; it reads QAGLLLHVANLATILCFPAAVVL. Topologically, residues 188 to 194 are lumenal; it reads LVESITP. The helical transmembrane segment at 195-226 threads the bilayer; it reads VGSLLALMVHTILFLKLFSYRDVNLWCRRARA. At 227-276 the chain is on the cytoplasmic side; it reads KAASAGKRASSAAAPHTVSYPDNLTYRDLYYFLFAPTLCYELNFPRSPRI. Residues 227 to 279 are intracellular loop 1 (IL1); sequence KAASAGKRASSAAAPHTVSYPDNLTYRDLYYFLFAPTLCYELNFPRSPRIRKR. A helical transmembrane segment spans residues 277 to 311; that stretch reads RKRFLLRRILEMLFFTQLQVGLIQQWMVPTIQNSM. Over 312–318 the chain is Lumenal; that stretch reads KPFKDMD. Residues 319-356 form a helical membrane-spanning segment; sequence YSRIIERLLKLAVPNHLIWLIFFYWLFHSCLNAVAELM. The Cytoplasmic segment spans residues 357 to 402; it reads QFGDREFYRDWWNSESVTYFWQNWNIPVHKWCIRHFYKPMLRRGSS. The tract at residues 357 to 402 is intracellular loop 2 (IL2); sequence QFGDREFYRDWWNSESVTYFWQNWNIPVHKWCIRHFYKPMLRRGSS. Positions 363–369 match the FYXDWWN motif motif; it reads FYRDWWN. An acyl-CoA-binding positions include 377–385, Tyr-393, and Arg-407; that span reads WQNWNIPVH. Residues 383–397 form an amphipathic helix (AH) region; it reads PVHKWCIRHFYKPML. A helical membrane pass occupies residues 403–423; the sequence is RWMARIGVFLASAFFHEYLVS. His-418 is a catalytic residue. Residues 424 to 431 are Lumenal-facing; the sequence is VPLRMFRL. Residues 432–450 form a helical membrane-spanning segment; it reads WAFTGMMAQIPLAWFVGRF. Topologically, residues 451–452 are cytoplasmic; it reads FQ. A helical transmembrane segment spans residues 453–484; the sequence is GNYGNAAVWLTLIIGQPIAVLMYVHDYYVLNY. Residue Tyr-480 coordinates an acyl-CoA. Residues 485–491 lie on the Lumenal side of the membrane; sequence EAPVAGA.

Belongs to the membrane-bound acyltransferase family. Sterol o-acyltransferase subfamily. Homodimer or homotetramer; both forms have similar enzymatic activities.

The protein resides in the endoplasmic reticulum membrane. The catalysed reaction is an acyl-CoA + a 1,2-diacyl-sn-glycerol = a triacyl-sn-glycerol + CoA. It carries out the reaction all-trans-retinol + an acyl-CoA = an all-trans-retinyl ester + CoA. It catalyses the reaction 2-(9Z-octadecenoyl)-glycerol + (9Z)-octadecenoyl-CoA = 1,2-di-(9Z-octadecenoyl)-sn-glycerol + CoA. The enzyme catalyses 1,2-di-(9Z-octadecenoyl)-sn-glycerol + (9Z)-octadecenoyl-CoA = 1,2,3-tri-(9Z-octadecenoyl)-glycerol + CoA. The catalysed reaction is all-trans-retinol + hexadecanoyl-CoA = all-trans-retinyl hexadecanoate + CoA. It carries out the reaction 1-O-(9Z-octadecenyl)-glycerol + (9Z)-octadecenoyl-CoA = 1-O-(9Z-octadecyl)-3-(9Z-octadecenoyl)-glycerol + CoA. It catalyses the reaction 1-O-(9Z-octadecyl)-3-(9Z-octadecenoyl)-glycerol + (9Z)-octadecenoyl-CoA = 1-O-(9Z-octadecenyl)-2,3-di-(9Z-octadecenoyl)glycerol + CoA. The enzyme catalyses 1-(9Z-octadecenoyl)-glycerol + (9Z)-octadecenoyl-CoA = 1,2-di-(9Z-octadecenoyl)-glycerol + CoA. The catalysed reaction is 1,2-di-(9Z-octadecenoyl)-glycerol + (9Z)-octadecenoate + H(+) = 1,2,3-tri-(9Z-octadecenoyl)-glycerol + H2O. It carries out the reaction 1-octadecanoyl-2-(5Z,8Z,11Z,14Z-eicosatetraenoyl)-sn-glycerol + (9Z)-octadecenoyl-CoA = 1-octadecanoyl-2-(5Z,8Z,11Z,14Z)-eicosatetraenoyl-3-(9Z)-octadecenoyl-sn-glycerol + CoA. It catalyses the reaction hexadecane-1,2-diol + 2 hexadecanoyl-CoA = 1,2-O,O-dihexadecanoyl-1,2-hexadecanediol + 2 CoA. The enzyme catalyses hexadecane-1,2-diol + hexadecanoyl-CoA = 2-hydroxyhexadecyl hexadecanoate + CoA. The catalysed reaction is 2-(9Z-octadecenoyl)-glycerol + hexadecanoyl-CoA = 1-hexadecanoyl-2-(9Z-octadecenoyl)-sn-glycerol + CoA. It carries out the reaction 1,2-di-(9Z-octadecenoyl)-sn-glycerol + hexadecanoyl-CoA = 1,2-di-(9Z)-octadecenoyl-3-hexadecanoyl-sn-glycerol + CoA. It catalyses the reaction hexadecan-1-ol + hexadecanoyl-CoA = hexadecanyl hexadecanoate + CoA. The enzyme catalyses 13-cis-retinol + hexadecanoyl-CoA = 13-cis-retinyl hexadecanoate + CoA. The catalysed reaction is 1,3-di-(9Z-octadecenoyl)-glycerol + (9Z)-octadecenoyl-CoA = 1,2,3-tri-(9Z-octadecenoyl)-glycerol + CoA. It carries out the reaction 2,3-di-(9Z)-octadecenoyl-sn-glycerol + (9Z)-octadecenoyl-CoA = 1,2,3-tri-(9Z-octadecenoyl)-glycerol + CoA. Its pathway is lipid metabolism; glycerolipid metabolism. Functionally, catalyzes the terminal and only committed step in triacylglycerol synthesis by using diacylglycerol and fatty acyl CoA as substrates. Highly expressed in epithelial cells of the small intestine and its activity is essential for the absorption of dietary fats. In liver, plays a role in esterifying exogenous fatty acids to glycerol, and is required to synthesize fat for storage. Also present in female mammary glands, where it produces fat in the milk. May be involved in VLDL (very low density lipoprotein) assembly. In contrast to DGAT2 it is not essential for survival. Functions as the major acyl-CoA retinol acyltransferase (ARAT) in the skin, where it acts to maintain retinoid homeostasis and prevent retinoid toxicity leading to skin and hair disorders. Exhibits additional acyltransferase activities, includin acyl CoA:monoacylglycerol acyltransferase (MGAT), wax monoester and wax diester synthases. Also able to use 1-monoalkylglycerol (1-MAkG) as an acyl acceptor for the synthesis of monoalkyl-monoacylglycerol (MAMAG). The chain is Diacylglycerol O-acyltransferase 1 (DGAT1) from Chlorocebus aethiops (Green monkey).